We begin with the raw amino-acid sequence, 329 residues long: Trans-1,2-dihydrobenzene-1,2-diol dehydrogenase (329 aa).

Belongs to the Gfo/Idh/MocA family. As to quaternary structure, homodimer. In terms of tissue distribution, lens, liver and small intestine.

It carries out the reaction (1R,2R)-1,2-dihydrobenzene-1,2-diol + NADP(+) = catechol + NADPH + H(+). The enzyme catalyses D-xylose + NADP(+) = D-xylono-1,5-lactone + NADPH + H(+). Stimulated by various salts. In Oryctolagus cuniculus (Rabbit), this protein is Trans-1,2-dihydrobenzene-1,2-diol dehydrogenase (DHDH).